The primary structure comprises 203 residues: Ribonuclease HII (203 aa).

The 186-residue stretch at 18-203 (GHYAGVDEVG…SFRPVREALA (186 aa)) folds into the RNase H type-2 domain. Residues Asp-24, Glu-25, and Asp-116 each contribute to the a divalent metal cation site.

This sequence belongs to the RNase HII family. Requires Mn(2+) as cofactor. The cofactor is Mg(2+).

The protein resides in the cytoplasm. The catalysed reaction is Endonucleolytic cleavage to 5'-phosphomonoester.. Endonuclease that specifically degrades the RNA of RNA-DNA hybrids. The polypeptide is Ribonuclease HII (Shewanella halifaxensis (strain HAW-EB4)).